A 690-amino-acid chain; its full sequence is Protein arginine N-methyltransferase 7 (690 aa).

SAM-dependent MTase PRMT-type domains lie at 14–357 (ENSW…YSLW) and 366–690 (AKSV…QKKP).

Belongs to the class I-like SAM-binding methyltransferase superfamily. Protein arginine N-methyltransferase family. PRMT7 subfamily.

In terms of biological role, essential arginine methyltransferase that can both catalyze the formation of omega-N monomethylarginine (MMA) and symmetrical dimethylarginine (sDMA). Specifically mediates the symmetrical dimethylation of arginine residues in the small nuclear ribonucleoproteins SmD1 and SmD3. This is Protein arginine N-methyltransferase 7 (Art7) from Drosophila ananassae (Fruit fly).